Consider the following 264-residue polypeptide: S-adenosylmethionine decarboxylase proenzyme (264 aa).

The Schiff-base intermediate with substrate; via pyruvic acid role is filled by Ser-112. At Ser-112 the chain carries Pyruvic acid (Ser); by autocatalysis. The active-site Proton acceptor; for processing activity is His-117. Catalysis depends on Cys-140, which acts as the Proton donor; for catalytic activity.

Belongs to the prokaryotic AdoMetDC family. Type 2 subfamily. Heterooctamer of four alpha and four beta chains arranged as a tetramer of alpha/beta heterodimers. It depends on pyruvate as a cofactor. Is synthesized initially as an inactive proenzyme. Formation of the active enzyme involves a self-maturation process in which the active site pyruvoyl group is generated from an internal serine residue via an autocatalytic post-translational modification. Two non-identical subunits are generated from the proenzyme in this reaction, and the pyruvate is formed at the N-terminus of the alpha chain, which is derived from the carboxyl end of the proenzyme. The post-translation cleavage follows an unusual pathway, termed non-hydrolytic serinolysis, in which the side chain hydroxyl group of the serine supplies its oxygen atom to form the C-terminus of the beta chain, while the remainder of the serine residue undergoes an oxidative deamination to produce ammonia and the pyruvoyl group blocking the N-terminus of the alpha chain.

The catalysed reaction is S-adenosyl-L-methionine + H(+) = S-adenosyl 3-(methylsulfanyl)propylamine + CO2. Its pathway is amine and polyamine biosynthesis; S-adenosylmethioninamine biosynthesis; S-adenosylmethioninamine from S-adenosyl-L-methionine: step 1/1. In terms of biological role, catalyzes the decarboxylation of S-adenosylmethionine to S-adenosylmethioninamine (dcAdoMet), the propylamine donor required for the synthesis of the polyamines spermine and spermidine from the diamine putrescine. The polypeptide is S-adenosylmethionine decarboxylase proenzyme (Klebsiella pneumoniae subsp. pneumoniae (strain ATCC 700721 / MGH 78578)).